Here is a 241-residue protein sequence, read N- to C-terminus: 2-C-methyl-D-erythritol 4-phosphate cytidylyltransferase (241 aa).

The protein belongs to the IspD/TarI cytidylyltransferase family. IspD subfamily.

The catalysed reaction is 2-C-methyl-D-erythritol 4-phosphate + CTP + H(+) = 4-CDP-2-C-methyl-D-erythritol + diphosphate. The protein operates within isoprenoid biosynthesis; isopentenyl diphosphate biosynthesis via DXP pathway; isopentenyl diphosphate from 1-deoxy-D-xylulose 5-phosphate: step 2/6. In terms of biological role, catalyzes the formation of 4-diphosphocytidyl-2-C-methyl-D-erythritol from CTP and 2-C-methyl-D-erythritol 4-phosphate (MEP). This chain is 2-C-methyl-D-erythritol 4-phosphate cytidylyltransferase, found in Baumannia cicadellinicola subsp. Homalodisca coagulata.